Reading from the N-terminus, the 518-residue chain is T-box transcription factor TBX5 (518 aa).

The tract at residues 1 to 46 is disordered; it reads MADTDEGFGLARTPLEPDSKDRSCDSKPESALGAPSKSPSSPQAAF. A compositionally biased stretch (basic and acidic residues) spans 15–28; it reads LEPDSKDRSCDSKP. Over residues 34–45 the composition is skewed to low complexity; the sequence is APSKSPSSPQAA. Residues 58-238 constitute a DNA-binding region (T-box); it reads LHERELWLKF…NNPFAKGFRG (181 aa). 2 disordered regions span residues 254-307 and 330-352; these read EYPV…LLPP and ECSSTEHPYKKPYMETSPSEEDT. The span at 269 to 301 shows a compositional bias: polar residues; that stretch reads SNHSPFSSETRALSTSSNLGSQYQCENGVSGPS. Lys339 carries the post-translational modification N6-acetyllysine.

Monomer. Homodimer (via the T-box); binds DNA as homodimer. Interacts (via the T-box) with NKX2-5 (via the homeobox); this complex binds DNA. Interacts with GATA4. Interacts with KAT2A and KAT2B. In terms of processing, acetylation at Lys-339 by KAT2A and KAT2B promotes nuclear retention.

It localises to the nucleus. Its subcellular location is the cytoplasm. DNA-binding protein that regulates the transcription of several genes and is involved in heart development and limb pattern formation. Binds to the core DNA motif of NPPA promoter. This chain is T-box transcription factor TBX5 (Tbx5), found in Mus musculus (Mouse).